The chain runs to 363 residues: Phosphoserine aminotransferase (363 aa).

Position 46 (Arg46) interacts with L-glutamate. Residues 80-81 (AT), Trp106, Thr156, Asp176, and Gln199 each bind pyridoxal 5'-phosphate. Lys200 carries the post-translational modification N6-(pyridoxal phosphate)lysine. Position 241–242 (241–242 (NT)) interacts with pyridoxal 5'-phosphate.

It belongs to the class-V pyridoxal-phosphate-dependent aminotransferase family. SerC subfamily. As to quaternary structure, homodimer. Pyridoxal 5'-phosphate serves as cofactor.

It localises to the cytoplasm. The catalysed reaction is O-phospho-L-serine + 2-oxoglutarate = 3-phosphooxypyruvate + L-glutamate. It catalyses the reaction 4-(phosphooxy)-L-threonine + 2-oxoglutarate = (R)-3-hydroxy-2-oxo-4-phosphooxybutanoate + L-glutamate. Its pathway is amino-acid biosynthesis; L-serine biosynthesis; L-serine from 3-phospho-D-glycerate: step 2/3. The protein operates within cofactor biosynthesis; pyridoxine 5'-phosphate biosynthesis; pyridoxine 5'-phosphate from D-erythrose 4-phosphate: step 3/5. Catalyzes the reversible conversion of 3-phosphohydroxypyruvate to phosphoserine and of 3-hydroxy-2-oxo-4-phosphonooxybutanoate to phosphohydroxythreonine. The polypeptide is Phosphoserine aminotransferase (Leptospira interrogans serogroup Icterohaemorrhagiae serovar copenhageni (strain Fiocruz L1-130)).